The sequence spans 209 residues: Phosphoheptose isomerase (209 aa).

Positions 50–209 constitute an SIS domain; that stretch reads IADTFREGGK…ELVEKMMGYD (160 aa). 65–67 serves as a coordination point for substrate; sequence NGG. Zn(2+)-binding residues include H74 and E78. Substrate-binding positions include E78, 109-110, 135-137, S140, and Q188; these read ND and STS. Residues Q188 and H196 each contribute to the Zn(2+) site.

It belongs to the SIS family. GmhA subfamily. Zn(2+) serves as cofactor.

It localises to the cytoplasm. It catalyses the reaction 2 D-sedoheptulose 7-phosphate = D-glycero-alpha-D-manno-heptose 7-phosphate + D-glycero-beta-D-manno-heptose 7-phosphate. Its pathway is carbohydrate biosynthesis; D-glycero-D-manno-heptose 7-phosphate biosynthesis; D-glycero-alpha-D-manno-heptose 7-phosphate and D-glycero-beta-D-manno-heptose 7-phosphate from sedoheptulose 7-phosphate: step 1/1. Functionally, catalyzes the isomerization of sedoheptulose 7-phosphate in D-glycero-D-manno-heptose 7-phosphate. This is Phosphoheptose isomerase from Chlorobaculum tepidum (strain ATCC 49652 / DSM 12025 / NBRC 103806 / TLS) (Chlorobium tepidum).